The chain runs to 260 residues: UPF0246 protein BURPS668_1321 (260 aa).

The protein belongs to the UPF0246 family.

This chain is UPF0246 protein BURPS668_1321, found in Burkholderia pseudomallei (strain 668).